Consider the following 658-residue polypeptide: MSQVAAESTAGLDQQFVGLDLKSSDNQNGGGNTESKGRYIPPHLRNRETSKGVCDKDSSGWSCSKDKDAYSSFGSRDSRGKPNYFSDRGSGSRGRFDDHGRNDYDGIGGRDRTGFGKFERSGHSRWSDRSDEDDWSKPLPPSERLEQELFSGGNTGINFEKYDDIPVEATGNNCPPHIENFSDIEMGEIIMGNIELTRYTRPTPVQKHAIPIIKEKRDLMACAQTGSGKTAAFLLPILSQIYTDGPGEALKAMKENGRYGRRKQYPISLVLAPTRELAVQIYEEARKFSYRSRVRPCVVYGGADTVQQIRDLERGCHLLVATPGRLVDMMERGKIGLDFCKYLVLDEADRMLDMGFEPQIRRIVEQDTMPPKGVRHTMMFSATFPKEIQMLARDFLDEYIFLAVGRVGSTSENITQKVVWVEELDKRSFLLDLLNATGKDSLTLVFVETKKGADSLENFLFQERYACTSIHGDRSQKDREEALHQFRSGRKPILVATAVAARGLDISNVKHVINFDLPSDIEEYVHRIGRTGRVGNLGLATSFFNERNLNITKDLLDLLVEAKQEVPSWLESMAYEHHYKGSSRGRSKSRFSGGFGARDYRQSSGSANAGFNSNRANSSRSSGSSHNRGFGGGGYGGFYNNDGYGGNYNSQAVDWWGN.

Positions M1–E143 are disordered. An N-acetylserine modification is found at S2. Positions R45–A69 are enriched in basic and acidic residues. Residue K56 is modified to N6-acetyllysine. A phosphoserine mark is found at S86 and S90. The segment covering G94 to R129 has biased composition (basic and acidic residues). An Omega-N-methylarginine modification is found at R101. Y104 carries the phosphotyrosine modification. At R110 the chain carries Omega-N-methylarginine. K117 bears the N6-acetyllysine mark. Phosphoserine occurs at positions 130 and 182. Residues E179–K207 carry the Q motif motif. Residue Y199–Q206 coordinates ATP. The 193-residue stretch at I210–L402 folds into the Helicase ATP-binding domain. K214 is covalently cross-linked (Glycyl lysine isopeptide (Lys-Gly) (interchain with G-Cter in SUMO2)). A223 to T230 contributes to the ATP binding site. Positions D346 to D349 match the DEAD box motif. The 162-residue stretch at N413–A574 folds into the Helicase C-terminal domain. Position 455 is a phosphoserine (S455). R590 carries the post-translational modification Omega-N-methylarginine. Phosphoserine is present on residues S592 and S603. The disordered stretch occupies residues A597–N627. Positions S603–N627 are enriched in low complexity. Omega-N-methylarginine occurs at positions 615 and 628.

It belongs to the DEAD box helicase family. DDX3/DED1 subfamily. In terms of tissue distribution, found in heart, brain, liver, skeletal muscle, kidney and testis. Low expression detected in lung. In testis, expressed in all types of spermatogenic cells including spermatogonia, spermatocytes, spermatids and somatic Sertoli cells within the seminiferous tubules. Also expressed in Leydig cells and other interstitial cells.

The protein resides in the cytoplasm. Its subcellular location is the nucleus. The catalysed reaction is ATP + H2O = ADP + phosphate + H(+). In terms of biological role, probable ATP-dependent RNA helicase. During immune response, may enhance IFNB1 expression via IRF3/IRF7 pathway. The polypeptide is ATP-dependent RNA helicase DDX3Y (Ddx3y) (Mus musculus (Mouse)).